Reading from the N-terminus, the 292-residue chain is ATP synthase gamma chain (292 aa).

This sequence belongs to the ATPase gamma chain family. In terms of assembly, F-type ATPases have 2 components, CF(1) - the catalytic core - and CF(0) - the membrane proton channel. CF(1) has five subunits: alpha(3), beta(3), gamma(1), delta(1), epsilon(1). CF(0) has three main subunits: a, b and c.

It is found in the cell membrane. Produces ATP from ADP in the presence of a proton gradient across the membrane. The gamma chain is believed to be important in regulating ATPase activity and the flow of protons through the CF(0) complex. The protein is ATP synthase gamma chain of Streptococcus mutans serotype c (strain ATCC 700610 / UA159).